We begin with the raw amino-acid sequence, 224 residues long: Synaptogyrin-2 (224 aa).

Position 1 is an N-acetylmethionine (M1). S3 carries the post-translational modification Phosphoserine. The MARVEL domain occupies 20 to 171; sequence FLKQPQVVVR…LAFLAYQRYK (152 aa). Helical transmembrane passes span 26-46, 73-93, 105-125, and 147-167; these read VVVRAVCLVFALIVFSCIFGE, AIGVLAFLASAFFFVVDIYFP, VIGDLLFSALWTFLWFVGFCF, and AAITFSFFSIFSWCVLAFLAY. Positions 196 to 224 are disordered; it reads PGVPADTYQQPPFTQNAESTEGYQPPPVY. Positions 202 to 217 are enriched in polar residues; sequence TYQQPPFTQNAESTEG.

Belongs to the synaptogyrin family. May be tyrosine phosphorylated by Src.

It is found in the cytoplasmic vesicle membrane. It localises to the cytoplasmic vesicle. The protein resides in the secretory vesicle. The protein localises to the synaptic vesicle membrane. Its function is as follows. May play a role in regulated exocytosis. In neuronal cells, modulates the localization of synaptophysin/SYP into synaptic-like microvesicles and may therefore play a role in the formation and/or the maturation of this vesicles. May also play a role in GLUT4 storage and transport to the plasma membrane. The sequence is that of Synaptogyrin-2 from Bos taurus (Bovine).